The following is a 499-amino-acid chain: L-arabinose isomerase (499 aa).

Mn(2+) contacts are provided by Glu-306, Glu-333, His-350, and His-449.

It belongs to the arabinose isomerase family. It depends on Mn(2+) as a cofactor.

The catalysed reaction is beta-L-arabinopyranose = L-ribulose. The protein operates within carbohydrate degradation; L-arabinose degradation via L-ribulose; D-xylulose 5-phosphate from L-arabinose (bacterial route): step 1/3. Catalyzes the conversion of L-arabinose to L-ribulose. The protein is L-arabinose isomerase of Tolumonas auensis (strain DSM 9187 / NBRC 110442 / TA 4).